A 202-amino-acid polypeptide reads, in one-letter code: Translation initiation factor IF-3 (202 aa).

Belongs to the IF-3 family. Monomer.

It localises to the cytoplasm. In terms of biological role, IF-3 binds to the 30S ribosomal subunit and shifts the equilibrium between 70S ribosomes and their 50S and 30S subunits in favor of the free subunits, thus enhancing the availability of 30S subunits on which protein synthesis initiation begins. This is Translation initiation factor IF-3 from Prochlorococcus marinus (strain NATL2A).